Here is a 229-residue protein sequence, read N- to C-terminus: 2-C-methyl-D-erythritol 4-phosphate cytidylyltransferase (229 aa).

This sequence belongs to the IspD/TarI cytidylyltransferase family. IspD subfamily.

The catalysed reaction is 2-C-methyl-D-erythritol 4-phosphate + CTP + H(+) = 4-CDP-2-C-methyl-D-erythritol + diphosphate. Its pathway is isoprenoid biosynthesis; isopentenyl diphosphate biosynthesis via DXP pathway; isopentenyl diphosphate from 1-deoxy-D-xylulose 5-phosphate: step 2/6. Functionally, catalyzes the formation of 4-diphosphocytidyl-2-C-methyl-D-erythritol from CTP and 2-C-methyl-D-erythritol 4-phosphate (MEP). This chain is 2-C-methyl-D-erythritol 4-phosphate cytidylyltransferase, found in Neisseria gonorrhoeae (strain NCCP11945).